A 167-amino-acid chain; its full sequence is NADH-quinone oxidoreductase subunit B (167 aa).

Positions 48, 49, 113, and 143 each coordinate [4Fe-4S] cluster.

It belongs to the complex I 20 kDa subunit family. In terms of assembly, NDH-1 is composed of 14 different subunits. Subunits NuoB, C, D, E, F, and G constitute the peripheral sector of the complex. It depends on [4Fe-4S] cluster as a cofactor.

It localises to the cell membrane. It catalyses the reaction a quinone + NADH + 5 H(+)(in) = a quinol + NAD(+) + 4 H(+)(out). Functionally, NDH-1 shuttles electrons from NADH, via FMN and iron-sulfur (Fe-S) centers, to quinones in the respiratory chain. Couples the redox reaction to proton translocation (for every two electrons transferred, four hydrogen ions are translocated across the cytoplasmic membrane), and thus conserves the redox energy in a proton gradient. The chain is NADH-quinone oxidoreductase subunit B from Wolbachia pipientis subsp. Culex pipiens (strain wPip).